The sequence spans 30 residues: Cysteine-rich venom protein okinavin (30 aa).

A disordered region spans residues 1 to 30 (SVDFDSESPRKPXIQNEIVDLHNPLRRXVN).

Belongs to the CRISP family. Post-translationally, contains 8 disulfide bonds. Expressed by the venom gland.

The protein localises to the secreted. In terms of biological role, inhibits calcium-activated potassium channels (KCa), voltage-gated potassium channel (Kv), and the calcium release channel/ryanodine receptor (RyR). This is Cysteine-rich venom protein okinavin from Ovophis okinavensis (Ryukyu Island pit viper).